We begin with the raw amino-acid sequence, 598 residues long: Beta-galactosidase (598 aa).

An N-terminal signal peptide occupies residues 1–21; the sequence is MLRTTLAPLVLALALALPAAA. The Proton donor role is filled by E184. E260 acts as the Nucleophile in catalysis.

This sequence belongs to the glycosyl hydrolase 35 family.

The catalysed reaction is Hydrolysis of terminal non-reducing beta-D-galactose residues in beta-D-galactosides.. In terms of biological role, preferentially hydrolyzes beta(1-&gt;3) galactosyl linkages over beta(1-&gt;4) linkages. The protein is Beta-galactosidase (bga) of Xanthomonas manihotis.